Consider the following 120-residue polypeptide: NAD(P)H-quinone oxidoreductase subunit 3, chloroplastic (120 aa).

3 helical membrane-spanning segments follow: residues 9 to 29 (IFWA…LISG), 64 to 84 (MFAL…PWAM), and 88 to 108 (VLGV…IVGL).

It belongs to the complex I subunit 3 family. In terms of assembly, NDH is composed of at least 16 different subunits, 5 of which are encoded in the nucleus.

The protein localises to the plastid. It is found in the chloroplast thylakoid membrane. It catalyses the reaction a plastoquinone + NADH + (n+1) H(+)(in) = a plastoquinol + NAD(+) + n H(+)(out). The catalysed reaction is a plastoquinone + NADPH + (n+1) H(+)(in) = a plastoquinol + NADP(+) + n H(+)(out). NDH shuttles electrons from NAD(P)H:plastoquinone, via FMN and iron-sulfur (Fe-S) centers, to quinones in the photosynthetic chain and possibly in a chloroplast respiratory chain. The immediate electron acceptor for the enzyme in this species is believed to be plastoquinone. Couples the redox reaction to proton translocation, and thus conserves the redox energy in a proton gradient. The polypeptide is NAD(P)H-quinone oxidoreductase subunit 3, chloroplastic (Ceratophyllum demersum (Rigid hornwort)).